The primary structure comprises 565 residues: Proline--tRNA ligase (565 aa).

Belongs to the class-II aminoacyl-tRNA synthetase family. ProS type 1 subfamily. Homodimer.

The protein localises to the cytoplasm. It carries out the reaction tRNA(Pro) + L-proline + ATP = L-prolyl-tRNA(Pro) + AMP + diphosphate. In terms of biological role, catalyzes the attachment of proline to tRNA(Pro) in a two-step reaction: proline is first activated by ATP to form Pro-AMP and then transferred to the acceptor end of tRNA(Pro). As ProRS can inadvertently accommodate and process non-cognate amino acids such as alanine and cysteine, to avoid such errors it has two additional distinct editing activities against alanine. One activity is designated as 'pretransfer' editing and involves the tRNA(Pro)-independent hydrolysis of activated Ala-AMP. The other activity is designated 'posttransfer' editing and involves deacylation of mischarged Ala-tRNA(Pro). The misacylated Cys-tRNA(Pro) is not edited by ProRS. This is Proline--tRNA ligase from Francisella tularensis subsp. tularensis (strain WY96-3418).